The following is a 975-amino-acid chain: NLR family member X1 (975 aa).

Residues 1–86 constitute a mitochondrion transit peptide; that stretch reads MRWGHHLPRA…EAIQRHRRNL (86 aa). Residues 75 to 556 are required for interaction with MAVS; the sequence is ATEAIQRHRR…RALPLLFNLI (482 aa). An NACHT domain is found at 160 to 483; sequence QTVVLYGTVG…LRFFLAPCVE (324 aa). 166–173 contributes to the ATP binding site; the sequence is GTVGTGKS. Positions 556–974 are required for the repression of MAVS-induced interferon signaling; it reads IKVVPRVFGR…ALLEQLGSSG (419 aa). The LRRNT domain occupies 667–694; sequence RQVLPPSELLDHLFFHYEFQNQRFSAEV. 8 LRR repeats span residues 695–718, 724–747, 749–777, 778–801, 811–834, 835–857, 858–877, and 878–899; these read LSSL…VVAA, RHAL…TLLP, FLRA…LLHD, QCQI…VLME, HLSL…LDRN, RQLQ…ALAR, AARE…ELSS, and EGRQ…VVVS. Residues 906-970 enclose the LRRCT domain; sequence VSEYWSVILS…GEVRALLEQL (65 aa).

This sequence belongs to the NLRP family. As to quaternary structure, homohexamer. Interacts with MAVS. Interacts with TUFM. (Microbial infection) Interacts with influenza A virus protein PB1-F2. As to expression, ubiquitously expressed. Strongest expression in mammary gland, heart and muscle. Detected in HeLa, HEK293T, THP-1, HL-60, Raji and Jurkat cell lines (at protein level).

The protein resides in the mitochondrion outer membrane. In terms of biological role, participates in antiviral signaling. Acts as a negative regulator of MAVS-mediated antiviral responses, through the inhibition of the virus-induced RLH (RIG-like helicase)-MAVS interaction. Instead, promotes autophagy by interacting with TUFM and subsequently recruiting the autophagy-related proteins ATG5 and ATG12. Also regulates MAVS-dependent NLRP3 inflammasome activation to attenuate apoptosis. Has no inhibitory function on NF-kappa-B signaling pathway, but enhances NF-kappa-B and JUN N-terminal kinase dependent signaling through the production of reactive oxygen species. Regulates viral mediated-inflammation and energy metabolism in a sex-dependent manner. In females, prevents uncontrolled inflammation and energy metabolism and thus, may contribute to the sex differences observed in infectious and inflammatory diseases. In Homo sapiens (Human), this protein is NLR family member X1 (NLRX1).